A 137-amino-acid polypeptide reads, in one-letter code: Fluoride-specific ion channel FluC 1 (137 aa).

A run of 4 helical transmembrane segments spans residues Leu-4–Gly-24, Leu-37–Ile-57, Ile-62–Phe-82, and Ile-100–Tyr-120. Na(+)-binding residues include Gly-77 and Thr-80.

Belongs to the fluoride channel Fluc/FEX (TC 1.A.43) family.

It localises to the cell membrane. It carries out the reaction fluoride(in) = fluoride(out). Its activity is regulated as follows. Na(+) is not transported, but it plays an essential structural role and its presence is essential for fluoride channel function. In terms of biological role, fluoride-specific ion channel. Important for reducing fluoride concentration in the cell, thus reducing its toxicity. The polypeptide is Fluoride-specific ion channel FluC 1 (Bacillus cereus (strain ATCC 10987 / NRS 248)).